We begin with the raw amino-acid sequence, 409 residues long: Isocitrate dehydrogenase [NADP] 1 (409 aa).

The NADP(+) site is built by Lys-75, Thr-78, Thr-80, and Arg-85. Mn(2+) is bound by residues Asp-255, Asp-278, and Asp-282. NADP(+)-binding residues include Gly-313, Thr-314, Val-315, His-318, and Asn-331.

It belongs to the isocitrate and isopropylmalate dehydrogenases family. As to quaternary structure, homodimer. It depends on Mg(2+) as a cofactor. Requires Mn(2+) as cofactor.

The enzyme catalyses D-threo-isocitrate + NADP(+) = 2-oxoglutarate + CO2 + NADPH. Its function is as follows. Catalyzes the oxidative decarboxylation of isocitrate to 2-oxoglutarate and carbon dioxide with the concomitant reduction of NADP(+). This chain is Isocitrate dehydrogenase [NADP] 1 (icd), found in Mycobacterium bovis (strain ATCC BAA-935 / AF2122/97).